The sequence spans 376 residues: Ribonucleoside-diphosphate reductase subunit beta (376 aa).

Residues Asp-85, Glu-116, and His-119 each coordinate Fe cation. The active site involves Tyr-123. Positions 205, 239, and 242 each coordinate Fe cation.

This sequence belongs to the ribonucleoside diphosphate reductase small chain family. Tetramer of two alpha and two beta subunits. The cofactor is Fe cation.

The catalysed reaction is a 2'-deoxyribonucleoside 5'-diphosphate + [thioredoxin]-disulfide + H2O = a ribonucleoside 5'-diphosphate + [thioredoxin]-dithiol. Provides the precursors necessary for DNA synthesis. Catalyzes the biosynthesis of deoxyribonucleotides from the corresponding ribonucleotides. This is Ribonucleoside-diphosphate reductase subunit beta (nrdB) from Buchnera aphidicola subsp. Acyrthosiphon pisum (strain APS) (Acyrthosiphon pisum symbiotic bacterium).